The sequence spans 209 residues: Uridine kinase (209 aa).

Residue 12-19 (GGSASGKT) participates in ATP binding.

This sequence belongs to the uridine kinase family.

The protein localises to the cytoplasm. It catalyses the reaction uridine + ATP = UMP + ADP + H(+). The catalysed reaction is cytidine + ATP = CMP + ADP + H(+). It participates in pyrimidine metabolism; CTP biosynthesis via salvage pathway; CTP from cytidine: step 1/3. Its pathway is pyrimidine metabolism; UMP biosynthesis via salvage pathway; UMP from uridine: step 1/1. This chain is Uridine kinase, found in Chloroflexus aggregans (strain MD-66 / DSM 9485).